A 229-amino-acid polypeptide reads, in one-letter code: Putative N-acetylmannosamine-6-phosphate 2-epimerase (229 aa).

Belongs to the NanE family.

The enzyme catalyses an N-acyl-D-glucosamine 6-phosphate = an N-acyl-D-mannosamine 6-phosphate. It participates in amino-sugar metabolism; N-acetylneuraminate degradation; D-fructose 6-phosphate from N-acetylneuraminate: step 3/5. Converts N-acetylmannosamine-6-phosphate (ManNAc-6-P) to N-acetylglucosamine-6-phosphate (GlcNAc-6-P). In Actinobacillus pleuropneumoniae serotype 5b (strain L20), this protein is Putative N-acetylmannosamine-6-phosphate 2-epimerase.